A 325-amino-acid polypeptide reads, in one-letter code: MSSITKRDKVIIGSRKSQLAMLQTEWVRDRIQELNPGIIVEIKTMDTTGDKVLDVSLSKIGDKGLFTKELEDMMLNGTIDLAVHSLKDIPTKLPDGLKLGAITKRYNTSDAFIANAKKHGKNCKLSELPQGAMIGSSSLRRVAQLKKAYPHLQFKDIRGNLNTRFKKLEDDSNGYDGMILAVAGLERMELTDHISEIIPDSISLYAVGQGSLGIECKDGDDFIQSILNPLIHRESMYCCEAERSMLRDLEGGCHVPIGVVTKLHNQSQPDETLEINAIVLNLDGSKYIESKIIGPSIQYYQLGKSIAQDLINKGSKDILSEFIKK.

Cys-253 bears the S-(dipyrrolylmethanemethyl)cysteine mark.

The protein belongs to the HMBS family. Requires dipyrromethane as cofactor.

The catalysed reaction is 4 porphobilinogen + H2O = hydroxymethylbilane + 4 NH4(+). It functions in the pathway porphyrin-containing compound metabolism; protoporphyrin-IX biosynthesis; coproporphyrinogen-III from 5-aminolevulinate: step 2/4. Tetrapolymerization of the monopyrrole PBG into the hydroxymethylbilane pre-uroporphyrinogen in several discrete steps. The chain is Porphobilinogen deaminase (hemC) from Dictyostelium discoideum (Social amoeba).